The following is a 231-amino-acid chain: Augmin complex subunit dgt2 (231 aa).

Residues 128 to 199 (QEADLSCDQK…VQTKAELLRG (72 aa)) adopt a coiled-coil conformation.

In terms of assembly, component of the augmin complex composed of dgt2, dgt3, dgt4, dgt5, dgt6, msd1, msd5 and wac. The complex interacts directly or indirectly with microtubules and is required for centrosome-independent generation of spindle microtubules. dgt2 interacts directly with wac (via coiled coil). In terms of tissue distribution, in adult females, detected only in the abdomen with no expression in the head or thorax (at protein level).

The protein localises to the cytoplasm. The protein resides in the cytoskeleton. It is found in the spindle. Its subcellular location is the spindle pole. In terms of biological role, as part of the augmin complex, plays a role in centrosome-independent generation of spindle microtubules. The complex is required for mitotic spindle assembly through its involvement in localizing gamma-tubulin to spindle microtubules. dgt2 binds to microtubules in vitro. This Drosophila melanogaster (Fruit fly) protein is Augmin complex subunit dgt2.